Consider the following 324-residue polypeptide: ATP-dependent 6-phosphofructokinase (324 aa).

Glycine 11 contacts ATP. Residue 21-25 (RAVVR) participates in ADP binding. ATP is bound by residues 72–73 (RE) and 102–105 (GNGS). Asparagine 103 is a binding site for Mg(2+). 126–128 (TID) contacts substrate. The Proton acceptor role is filled by aspartate 128. Residue arginine 155 coordinates ADP. Substrate-binding positions include arginine 163 and 170–172 (MGR). ADP contacts are provided by residues 186-188 (GAD), arginine 212, and 214-216 (KKF). Substrate is bound by residues glutamate 223, arginine 248, and 254 to 257 (YIQR).

It belongs to the phosphofructokinase type A (PFKA) family. ATP-dependent PFK group I subfamily. Prokaryotic clade 'B1' sub-subfamily. Homotetramer. It depends on Mg(2+) as a cofactor.

It localises to the cytoplasm. It carries out the reaction beta-D-fructose 6-phosphate + ATP = beta-D-fructose 1,6-bisphosphate + ADP + H(+). It functions in the pathway carbohydrate degradation; glycolysis; D-glyceraldehyde 3-phosphate and glycerone phosphate from D-glucose: step 3/4. With respect to regulation, allosterically activated by ADP and other diphosphonucleosides, and allosterically inhibited by phosphoenolpyruvate. Its function is as follows. Catalyzes the phosphorylation of D-fructose 6-phosphate to fructose 1,6-bisphosphate by ATP, the first committing step of glycolysis. This chain is ATP-dependent 6-phosphofructokinase, found in Persephonella marina (strain DSM 14350 / EX-H1).